The sequence spans 298 residues: Probable 2-(5''-triphosphoribosyl)-3'-dephosphocoenzyme-A synthase 2 (298 aa).

It belongs to the CitG/MdcB family.

The enzyme catalyses 3'-dephospho-CoA + ATP = 2'-(5''-triphospho-alpha-D-ribosyl)-3'-dephospho-CoA + adenine. The protein is Probable 2-(5''-triphosphoribosyl)-3'-dephosphocoenzyme-A synthase 2 of Salmonella typhi.